The following is a 569-amino-acid chain: Urease subunit beta (569 aa).

The Urease domain maps to 131–569 (GGIDTHIHFI…VSLAQLFSIF (439 aa)). His-136, His-138, and Lys-219 together coordinate Ni(2+). Residue Lys-219 is modified to N6-carboxylysine. His-221 contributes to the substrate binding site. The Ni(2+) site is built by His-248 and His-274. The active-site Proton donor is His-322. Asp-362 provides a ligand contact to Ni(2+).

It belongs to the metallo-dependent hydrolases superfamily. Urease alpha subunit family. As to quaternary structure, heterohexamer of 3 UreA (alpha) and 3 UreB (beta) subunits. It depends on Ni cation as a cofactor. In terms of processing, carboxylation allows a single lysine to coordinate two nickel ions.

The protein localises to the cytoplasm. The catalysed reaction is urea + 2 H2O + H(+) = hydrogencarbonate + 2 NH4(+). It functions in the pathway nitrogen metabolism; urea degradation; CO(2) and NH(3) from urea (urease route): step 1/1. This is Urease subunit beta from Helicobacter pylori (strain HPAG1).